A 212-amino-acid chain; its full sequence is Peptide methionine sulfoxide reductase MsrA (212 aa).

Residues 1 to 14 show a composition bias toward polar residues; sequence MSSIDKTQRITQSD. Residues 1-21 are disordered; that stretch reads MSSIDKTQRITQSDALPGRST. Cysteine 52 is a catalytic residue.

It belongs to the MsrA Met sulfoxide reductase family.

It carries out the reaction L-methionyl-[protein] + [thioredoxin]-disulfide + H2O = L-methionyl-(S)-S-oxide-[protein] + [thioredoxin]-dithiol. The enzyme catalyses [thioredoxin]-disulfide + L-methionine + H2O = L-methionine (S)-S-oxide + [thioredoxin]-dithiol. In terms of biological role, has an important function as a repair enzyme for proteins that have been inactivated by oxidation. Catalyzes the reversible oxidation-reduction of methionine sulfoxide in proteins to methionine. The protein is Peptide methionine sulfoxide reductase MsrA of Pectobacterium carotovorum subsp. carotovorum (strain PC1).